A 155-amino-acid polypeptide reads, in one-letter code: Small ribosomal subunit protein uS7c (155 aa).

The protein belongs to the universal ribosomal protein uS7 family. Part of the 30S ribosomal subunit.

It localises to the plastid. It is found in the chloroplast. In terms of biological role, one of the primary rRNA binding proteins, it binds directly to 16S rRNA where it nucleates assembly of the head domain of the 30S subunit. This chain is Small ribosomal subunit protein uS7c (rps7), found in Butomus umbellatus (Flowering rush).